Reading from the N-terminus, the 321-residue chain is GTP 3',8-cyclase (321 aa).

Positions 5–227 (SYDRVVDYLR…DEGYDGASPS (223 aa)) constitute a Radical SAM core domain. Residue Arg-14 participates in GTP binding. [4Fe-4S] cluster is bound by residues Cys-21 and Cys-25. Tyr-27 is a binding site for S-adenosyl-L-methionine. Cys-28 provides a ligand contact to [4Fe-4S] cluster. Position 64 (Arg-64) interacts with GTP. Gly-68 provides a ligand contact to S-adenosyl-L-methionine. A GTP-binding site is contributed by Thr-95. Ser-119 contributes to the S-adenosyl-L-methionine binding site. Lys-155 contacts GTP. Met-189 lines the S-adenosyl-L-methionine pocket. [4Fe-4S] cluster is bound by residues Cys-249 and Cys-252. 254 to 256 (RIR) provides a ligand contact to GTP. Residue Cys-266 participates in [4Fe-4S] cluster binding.

This sequence belongs to the radical SAM superfamily. MoaA family. As to quaternary structure, monomer and homodimer. [4Fe-4S] cluster is required as a cofactor.

The catalysed reaction is GTP + AH2 + S-adenosyl-L-methionine = (8S)-3',8-cyclo-7,8-dihydroguanosine 5'-triphosphate + 5'-deoxyadenosine + L-methionine + A + H(+). Its pathway is cofactor biosynthesis; molybdopterin biosynthesis. Functionally, catalyzes the cyclization of GTP to (8S)-3',8-cyclo-7,8-dihydroguanosine 5'-triphosphate. The protein is GTP 3',8-cyclase of Sulfurimonas denitrificans (strain ATCC 33889 / DSM 1251) (Thiomicrospira denitrificans (strain ATCC 33889 / DSM 1251)).